Here is a 495-residue protein sequence, read N- to C-terminus: L-2,4-diaminobutyrate decarboxylase (495 aa).

An N6-(pyridoxal phosphate)lysine modification is found at K312.

It belongs to the group II decarboxylase family. Requires pyridoxal 5'-phosphate as cofactor.

The enzyme catalyses L-2,4-diaminobutanoate + H(+) = propane-1,3-diamine + CO2. Its pathway is siderophore biosynthesis; rhizobactin biosynthesis. The sequence is that of L-2,4-diaminobutyrate decarboxylase (rhbB) from Rhizobium meliloti (strain 1021) (Ensifer meliloti).